Consider the following 478-residue polypeptide: Ribosomal RNA small subunit methyltransferase F (478 aa).

S-adenosyl-L-methionine is bound by residues 123–129 (AAAPGSK), Glu147, Asp174, and Asp192. The Nucleophile role is filled by Cys245.

It belongs to the class I-like SAM-binding methyltransferase superfamily. RsmB/NOP family.

It localises to the cytoplasm. It carries out the reaction cytidine(1407) in 16S rRNA + S-adenosyl-L-methionine = 5-methylcytidine(1407) in 16S rRNA + S-adenosyl-L-homocysteine + H(+). Specifically methylates the cytosine at position 1407 (m5C1407) of 16S rRNA. The chain is Ribosomal RNA small subunit methyltransferase F from Vibrio parahaemolyticus serotype O3:K6 (strain RIMD 2210633).